The following is a 339-amino-acid chain: MKKKTTGHTTIKDVAECAGVSKSTVSRYINGKIDAISPEKVKNIKKAIAELNYRPSKMAQGLKIKKSKLIGFVVADITNPFSVAAFRGVEEVCDQYGYSIMVCNTDNSPEKEREMLLKLEAHSVEGLILNATGENKDVLRAFAEQQIPTILIDRKLPDLKLDTVTTDNRWITKEILQKVYSKGYTDVALFTEPISSISPRAERAAVYQEMASVQNVNGLVRLHEIDVKDKEQLKAELRSFHKEMPEQKKAILALNGLIMLKIISCMEELGLRIPQDIGIAGFDDTEWYKLIGPGITTIAQPSHDMGRTAMERVLKRIEGDKGAPQTIELEAKVIMRKSL.

In terms of domain architecture, HTH lacI-type spans Thr-9–Ile-64. The segment at residues Ile-11–Asn-30 is a DNA-binding region (H-T-H motif).

Functionally, transcriptional repressor of the kdgRKAT and kduID operons for pectin utilization. The chain is HTH-type transcriptional regulator KdgR (kdgR) from Bacillus subtilis (strain 168).